Here is a 96-residue protein sequence, read N- to C-terminus: Teretoxin Tan6.14 (96 aa).

Positions 1-21 (MRPLLVFVLMVSVSLAFSLEG) are cleaved as a signal peptide. Positions 22–60 (MPNNGGDSVASITANQARRFKRNPLFSFAQHSLVDLKAR) are excised as a propeptide.

Contains 3 disulfide bonds. As to expression, expressed by the venom duct.

The protein localises to the secreted. The chain is Teretoxin Tan6.14 from Terebra anilis (Auger snail).